The chain runs to 234 residues: Sugar fermentation stimulation protein homolog (234 aa).

This sequence belongs to the SfsA family.

The sequence is that of Sugar fermentation stimulation protein homolog from Shewanella baltica (strain OS195).